The chain runs to 562 residues: Long-chain-fatty-acid--CoA ligase (562 aa).

Belongs to the ATP-dependent AMP-binding enzyme family. Mg(2+) is required as a cofactor.

It is found in the membrane. It carries out the reaction a long-chain fatty acid + ATP + CoA = a long-chain fatty acyl-CoA + AMP + diphosphate. Its pathway is lipid metabolism; fatty acid beta-oxidation. In terms of biological role, catalyzes the esterification, concomitant with transport, of exogenous long-chain fatty acids into metabolically active CoA thioesters for subsequent degradation or incorporation into phospholipids. The protein is Long-chain-fatty-acid--CoA ligase (fadD) of Haemophilus influenzae (strain ATCC 51907 / DSM 11121 / KW20 / Rd).